Reading from the N-terminus, the 334-residue chain is Peroxidase 65 (334 aa).

Residues 1–28 (MSNMQFSRGFNPFVILFCLAVVAPIISA) form the signal peptide. 4 cysteine pairs are disulfide-bonded: C42–C123, C75–C80, C129–C326, and C208–C236. H73 serves as the catalytic Proton acceptor. Ca(2+) is bound by residues D74, G79, D81, and S83. P171 is a substrate binding site. N174 is a glycosylation site (N-linked (GlcNAc...) asparagine). H201 serves as a coordination point for heme b. Residue T202 participates in Ca(2+) binding. A glycan (N-linked (GlcNAc...) asparagine) is linked at N238. Ca(2+) contacts are provided by D250, T253, and D258. N-linked (GlcNAc...) asparagine glycans are attached at residues N282 and N294.

This sequence belongs to the peroxidase family. Classical plant (class III) peroxidase subfamily. It depends on heme b as a cofactor. The cofactor is Ca(2+).

It is found in the secreted. It catalyses the reaction 2 a phenolic donor + H2O2 = 2 a phenolic radical donor + 2 H2O. Functionally, removal of H(2)O(2), oxidation of toxic reductants, biosynthesis and degradation of lignin, suberization, auxin catabolism, response to environmental stresses such as wounding, pathogen attack and oxidative stress. These functions might be dependent on each isozyme/isoform in each plant tissue. This Arabidopsis thaliana (Mouse-ear cress) protein is Peroxidase 65 (PER65).